A 246-amino-acid polypeptide reads, in one-letter code: Bidirectional sugar transporter SWEET3a (246 aa).

The Extracellular segment spans residues 1–6 (MFPDIR). The chain crosses the membrane as a helical span at residues 7–27 (FIVGIIGSVACMLLYSAPILT). A MtN3/slv 1 domain is found at 7-96 (FIVGIIGSVA…ISIYVWFAPR (90 aa)). Residues 28–42 (FKRVIKKASVEEFSC) lie on the Cytoplasmic side of the membrane. Residues 43 to 63 (IPYILALFSCLTYSWYGFPVV) form a helical membrane-spanning segment. Over 64–74 (SYGWENMTVCS) the chain is Extracellular. An N-linked (GlcNAc...) asparagine glycan is attached at Asn69. A helical transmembrane segment spans residues 75 to 95 (ISSLGVLFEGTFISIYVWFAP). Topologically, residues 96 to 101 (RGKKKQ) are cytoplasmic. A helical transmembrane segment spans residues 102 to 122 (VMLMASLILAVFCMTVFFSSF). At 123 to 131 (SIHNHHIRK) the chain is on the extracellular side. A helical transmembrane segment spans residues 132–152 (VFVGSVGLVSSISMYGSPLVA). Positions 133-217 (FVGSVGLVSS…VVYCIYSKCK (85 aa)) constitute a MtN3/slv 2 domain. Residues 153–166 (MKQVIRTKSVEFMP) lie on the Cytoplasmic side of the membrane. Residues 167–187 (FYLSLFTLFTSLTWMAYGVIG) form a helical membrane-spanning segment. At 188–191 (RDPF) the chain is on the extracellular side. The chain crosses the membrane as a helical span at residues 192 to 212 (IATPNCIGSIMGILQLVVYCI). The Cytoplasmic segment spans residues 213–246 (YSKCKEAPKVLHDIEQANVVKIPTSHVDTKGHNP).

Belongs to the SWEET sugar transporter family. In terms of assembly, forms homooligomers and/or heterooligomers.

Its subcellular location is the cell membrane. Its function is as follows. Mediates both low-affinity uptake and efflux of sugar across the plasma membrane. This is Bidirectional sugar transporter SWEET3a (SWEET3A) from Oryza sativa subsp. japonica (Rice).